Reading from the N-terminus, the 454-residue chain is Metacaspase-1A (454 aa).

Over residues 1 to 16 the composition is skewed to gly residues; sequence MSYGYPGQGYGPGGGH. The interval 1–129 is disordered; the sequence is MSYGYPGQGY…GHQTRNQGSH (129 aa). 4 stretches are compositionally biased toward low complexity: residues 38-47, 59-80, 88-101, and 109-120; these read YSNPGQGQYN, YHQQ…YPPQ, GQQQ…HSQR, and GYDIYGYPIGSG. Catalysis depends on residues H244 and C300.

This sequence belongs to the peptidase C14B family.

Involved in cell death (apoptosis). This is Metacaspase-1A (casA) from Neurospora crassa (strain ATCC 24698 / 74-OR23-1A / CBS 708.71 / DSM 1257 / FGSC 987).